Here is a 338-residue protein sequence, read N- to C-terminus: Ketol-acid reductoisomerase (NADP(+)) (338 aa).

One can recognise a KARI N-terminal Rossmann domain in the interval 1 to 181 (MKVFYDKDCD…GGGRAGIIET (181 aa)). NADP(+) is bound by residues 24–27 (YGSQ), Arg-47, and Ser-52. His-107 is an active-site residue. An NADP(+)-binding site is contributed by Gly-133. One can recognise a KARI C-terminal knotted domain in the interval 182 to 327 (DFREETETDL…GKLRAMMPWI (146 aa)). Residues Asp-190, Glu-194, Glu-226, and Glu-230 each contribute to the Mg(2+) site. Ser-251 is a substrate binding site.

This sequence belongs to the ketol-acid reductoisomerase family. Requires Mg(2+) as cofactor.

It carries out the reaction (2R)-2,3-dihydroxy-3-methylbutanoate + NADP(+) = (2S)-2-acetolactate + NADPH + H(+). The catalysed reaction is (2R,3R)-2,3-dihydroxy-3-methylpentanoate + NADP(+) = (S)-2-ethyl-2-hydroxy-3-oxobutanoate + NADPH + H(+). The protein operates within amino-acid biosynthesis; L-isoleucine biosynthesis; L-isoleucine from 2-oxobutanoate: step 2/4. It functions in the pathway amino-acid biosynthesis; L-valine biosynthesis; L-valine from pyruvate: step 2/4. Functionally, involved in the biosynthesis of branched-chain amino acids (BCAA). Catalyzes an alkyl-migration followed by a ketol-acid reduction of (S)-2-acetolactate (S2AL) to yield (R)-2,3-dihydroxy-isovalerate. In the isomerase reaction, S2AL is rearranged via a Mg-dependent methyl migration to produce 3-hydroxy-3-methyl-2-ketobutyrate (HMKB). In the reductase reaction, this 2-ketoacid undergoes a metal-dependent reduction by NADPH to yield (R)-2,3-dihydroxy-isovalerate. The chain is Ketol-acid reductoisomerase (NADP(+)) from Bordetella petrii (strain ATCC BAA-461 / DSM 12804 / CCUG 43448).